The sequence spans 116 residues: Large ribosomal subunit protein uL18 (116 aa).

The protein belongs to the universal ribosomal protein uL18 family. Part of the 50S ribosomal subunit; part of the 5S rRNA/L5/L18/L25 subcomplex. Contacts the 5S and 23S rRNAs.

Its function is as follows. This is one of the proteins that bind and probably mediate the attachment of the 5S RNA into the large ribosomal subunit, where it forms part of the central protuberance. The protein is Large ribosomal subunit protein uL18 of Novosphingobium aromaticivorans (strain ATCC 700278 / DSM 12444 / CCUG 56034 / CIP 105152 / NBRC 16084 / F199).